A 398-amino-acid chain; its full sequence is GTPase Obg (398 aa).

The 159-residue stretch at 1 to 159 (MKFVDEAPIS…RNLKLELKVL (159 aa)) folds into the Obg domain. The disordered stretch occupies residues 128–148 (TRFKSSTNRVPRKTTPGTEGE). The OBG-type G domain occupies 160–333 (ADVGMLGLPN…LSGKIMDHLE (174 aa)). GTP contacts are provided by residues 166–173 (GLPNAGKS), 191–195 (FTTLV), 213–216 (DIPG), 283–286 (NKID), and 314–316 (SAL). Mg(2+)-binding residues include Ser173 and Thr193.

The protein belongs to the TRAFAC class OBG-HflX-like GTPase superfamily. OBG GTPase family. In terms of assembly, monomer. Requires Mg(2+) as cofactor.

It is found in the cytoplasm. Its function is as follows. An essential GTPase which binds GTP, GDP and possibly (p)ppGpp with moderate affinity, with high nucleotide exchange rates and a fairly low GTP hydrolysis rate. Plays a role in control of the cell cycle, stress response, ribosome biogenesis and in those bacteria that undergo differentiation, in morphogenesis control. The sequence is that of GTPase Obg from Cellvibrio japonicus (strain Ueda107) (Pseudomonas fluorescens subsp. cellulosa).